We begin with the raw amino-acid sequence, 111 residues long: Class I hydrophobin 10 (111 aa).

Residues methionine 1–alanine 17 form the signal peptide. Cystine bridges form between cysteine 30–cysteine 90, cysteine 37–cysteine 84, cysteine 38–cysteine 71, and cysteine 91–cysteine 104.

It belongs to the fungal hydrophobin family. In terms of assembly, self-assembles to form functional amyloid fibrils called rodlets. Self-assembly into fibrillar rodlets occurs spontaneously at hydrophobic:hydrophilic interfaces and the rodlets further associate laterally to form amphipathic monolayers.

It localises to the secreted. The protein resides in the cell wall. In terms of biological role, aerial growth, conidiation, and dispersal of filamentous fungi in the environment rely upon a capability of their secreting small amphipathic proteins called hydrophobins (HPBs) with low sequence identity. Class I can self-assemble into an outermost layer of rodlet bundles on aerial cell surfaces, conferring cellular hydrophobicity that supports fungal growth, development and dispersal; whereas Class II form highly ordered films at water-air interfaces through intermolecular interactions but contribute nothing to the rodlet structure. This Pleurotus ostreatus (strain PC15) (Oyster mushroom) protein is Class I hydrophobin 10.